A 608-amino-acid polypeptide reads, in one-letter code: Bifunctional dihydrofolate reductase-thymidylate synthase (608 aa).

The DHFR domain occupies 10–228 (DIYAICACCK…TTLDFIIYKK (219 aa)). Substrate is bound at residue 14-15 (IC). A16 contacts NADP(+). Substrate is bound at residue V31. NADP(+) is bound at residue 39 to 45 (GLGNKGV). Positions 54 and 108 each coordinate substrate. NADP(+) contacts are provided by residues 106–108 (RTN), 128–130 (SRT), and N144. I164, Y170, and T185 together coordinate substrate. 165 to 172 (GGSVVYQE) contacts NADP(+). The tract at residues 322–608 (YHPEYQYLNI…HEKISMDMAA (287 aa)) is thymidylate synthase. R345 is a dUMP binding site. C490 is a catalytic residue. Residues H491, 509–513 (QRSCD), N521, and 551–553 (HVY) contribute to the dUMP site.

This sequence in the N-terminal section; belongs to the dihydrofolate reductase family. In the C-terminal section; belongs to the thymidylate synthase family. As to quaternary structure, homodimer.

It carries out the reaction (6S)-5,6,7,8-tetrahydrofolate + NADP(+) = 7,8-dihydrofolate + NADPH + H(+). The enzyme catalyses dUMP + (6R)-5,10-methylene-5,6,7,8-tetrahydrofolate = 7,8-dihydrofolate + dTMP. It functions in the pathway cofactor biosynthesis; tetrahydrofolate biosynthesis; 5,6,7,8-tetrahydrofolate from 7,8-dihydrofolate: step 1/1. In terms of biological role, bifunctional enzyme. Involved in de novo dTMP biosynthesis. Key enzyme in folate metabolism. Catalyzes an essential reaction for de novo glycine and purine synthesis, DNA precursor synthesis, and for the conversion of dUMP to dTMP. This chain is Bifunctional dihydrofolate reductase-thymidylate synthase, found in Plasmodium falciparum (isolate K1 / Thailand).